The following is a 278-amino-acid chain: MSLLLQQHLSQPWRFLDHTSFGPTFQALQSFAYDDTLCTSIGKSQSPPTLRAWVHHNTVVLGIQDSRLPQIKAGIEALKGFQHDVIVRNSGGLAVVLDSGILNLSLVLKEEKGFSIDDGYELMYELICSMFQDHREQIEAREIVGSYCPGSYDLSIDGKKFAGISQRRIRGGVAVQIYLCVSGSGAERAKMIRTFYDKAVAGQPTKFVYPRIKPETMASLSELLGQPHNVSDVLLKALMTLQQHGASLLTESLSADEWLLYEQHFARISERNEKLLAE.

The BPL/LPL catalytic domain maps to 44-249 (SQSPPTLRAW…TLQQHGASLL (206 aa)). Cys148 acts as the Acyl-thioester intermediate in catalysis.

This sequence belongs to the octanoyltransferase LipL family.

The enzyme catalyses N(6)-octanoyl-L-lysyl-[glycine-cleavage complex H protein] + L-lysyl-[lipoyl-carrier protein] = N(6)-octanoyl-L-lysyl-[lipoyl-carrier protein] + L-lysyl-[glycine-cleavage complex H protein]. The protein operates within protein modification; protein lipoylation via endogenous pathway; protein N(6)-(lipoyl)lysine from octanoyl-[acyl-carrier-protein]. Its function is as follows. Catalyzes the amidotransfer (transamidation) of the octanoyl moiety from octanoyl-GcvH to the lipoyl domain of the E2 subunit of lipoate-dependent enzymes. This Halalkalibacterium halodurans (strain ATCC BAA-125 / DSM 18197 / FERM 7344 / JCM 9153 / C-125) (Bacillus halodurans) protein is Octanoyl-[GcvH]:protein N-octanoyltransferase.